The following is a 349-amino-acid chain: Macrophage-capping protein (349 aa).

Met1 carries the N-acetylmethionine modification. 3 Gelsolin-like repeats span residues 28-107, 147-222, and 264-342; these read KLKP…DLFM, KNIR…AEMI, and LTKV…PIFK. Positions 138-147 match the Nuclear localization signal motif; sequence RKLYQVKGKK. Ser338 carries the phosphoserine modification.

It belongs to the villin/gelsolin family. Interacts with NUP62. Interacts with NUTF2 and RAN; involved in CAPG nuclear import. In terms of processing, phosphorylated.

It localises to the nucleus. The protein localises to the cytoplasm. Its subcellular location is the melanosome. The protein resides in the cell projection. It is found in the lamellipodium. It localises to the ruffle. Calcium-sensitive protein which reversibly blocks the barbed ends of actin filaments but does not sever preformed actin filaments. May play an important role in macrophage function. May play a role in regulating cytoplasmic and/or nuclear structures through potential interactions with actin. May bind DNA. Uncapping occurs either when Ca(2+) falls or when the concentration of polyphosphoinositide rises, both at low and high Ca(2+). The chain is Macrophage-capping protein (Capg) from Rattus norvegicus (Rat).